A 144-amino-acid polypeptide reads, in one-letter code: Glutaredoxin-C6 (144 aa).

Positions 39–143 constitute a Glutaredoxin domain; the sequence is EAKIRRLISE…PKLVQVGALW (105 aa). Cys59 and Cys62 are joined by a disulfide.

This sequence belongs to the glutaredoxin family. CC-type subfamily.

It is found in the cytoplasm. Has a glutathione-disulfide oxidoreductase activity in the presence of NADPH and glutathione reductase. Reduces low molecular weight disulfides and proteins. In Arabidopsis thaliana (Mouse-ear cress), this protein is Glutaredoxin-C6 (GRXC6).